Consider the following 213-residue polypeptide: Small ribosomal subunit protein uS4 (213 aa).

The tract at residues 16–53 (GTDLGLKSGVKPYDVKTKKSARPPGQHGVSRNKSSEYS) is disordered. Over residues 44–53 (VSRNKSSEYS) the composition is skewed to polar residues. Residues 97-163 (SRLDNVVYRM…EKSREQLRIK (67 aa)) form the S4 RNA-binding domain.

Belongs to the universal ribosomal protein uS4 family. Part of the 30S ribosomal subunit. Contacts protein S5. The interaction surface between S4 and S5 is involved in control of translational fidelity.

In terms of biological role, one of the primary rRNA binding proteins, it binds directly to 16S rRNA where it nucleates assembly of the body of the 30S subunit. Its function is as follows. With S5 and S12 plays an important role in translational accuracy. The polypeptide is Small ribosomal subunit protein uS4 (Psychrobacter cryohalolentis (strain ATCC BAA-1226 / DSM 17306 / VKM B-2378 / K5)).